The chain runs to 151 residues: Transcriptional repressor NrdR (151 aa).

Residues 3–34 (CPFCNSVDTSVKNSRPSDCKMSVRRRRSCDSC) fold into a zinc finger. An ATP-cone domain is found at 49–139 (VKVLKKDGSV…VYMNFSDVND (91 aa)).

It belongs to the NrdR family. Zn(2+) serves as cofactor.

Negatively regulates transcription of bacterial ribonucleotide reductase nrd genes and operons by binding to NrdR-boxes. In Anaplasma marginale (strain Florida), this protein is Transcriptional repressor NrdR.